Here is an 80-residue protein sequence, read N- to C-terminus: RNA-binding protein Hfq (80 aa).

Residues 10–70 (DLFLNTVRKQ…ISTIMPGQPM (61 aa)) enclose the Sm domain.

It belongs to the Hfq family. In terms of assembly, homohexamer.

Functionally, RNA chaperone that binds small regulatory RNA (sRNAs) and mRNAs to facilitate mRNA translational regulation in response to envelope stress, environmental stress and changes in metabolite concentrations. Also binds with high specificity to tRNAs. The sequence is that of RNA-binding protein Hfq from Agrobacterium fabrum (strain C58 / ATCC 33970) (Agrobacterium tumefaciens (strain C58)).